A 169-amino-acid polypeptide reads, in one-letter code: 6,7-dimethyl-8-ribityllumazine synthase (169 aa).

5-amino-6-(D-ribitylamino)uracil contacts are provided by residues phenylalanine 24, 58 to 60 (ALE), and 82 to 84 (AVI). 87–88 (ET) is a (2S)-2-hydroxy-3-oxobutyl phosphate binding site. Histidine 90 functions as the Proton donor in the catalytic mechanism. Asparagine 115 is a binding site for 5-amino-6-(D-ribitylamino)uracil. Arginine 129 is a binding site for (2S)-2-hydroxy-3-oxobutyl phosphate.

This sequence belongs to the DMRL synthase family.

The enzyme catalyses (2S)-2-hydroxy-3-oxobutyl phosphate + 5-amino-6-(D-ribitylamino)uracil = 6,7-dimethyl-8-(1-D-ribityl)lumazine + phosphate + 2 H2O + H(+). Its pathway is cofactor biosynthesis; riboflavin biosynthesis; riboflavin from 2-hydroxy-3-oxobutyl phosphate and 5-amino-6-(D-ribitylamino)uracil: step 1/2. Its function is as follows. Catalyzes the formation of 6,7-dimethyl-8-ribityllumazine by condensation of 5-amino-6-(D-ribitylamino)uracil with 3,4-dihydroxy-2-butanone 4-phosphate. This is the penultimate step in the biosynthesis of riboflavin. The chain is 6,7-dimethyl-8-ribityllumazine synthase from Burkholderia vietnamiensis (strain G4 / LMG 22486) (Burkholderia cepacia (strain R1808)).